We begin with the raw amino-acid sequence, 267 residues long: Tryptophan synthase alpha chain (267 aa).

Active-site proton acceptor residues include Glu-49 and Asp-60.

Belongs to the TrpA family. In terms of assembly, tetramer of two alpha and two beta chains.

The enzyme catalyses (1S,2R)-1-C-(indol-3-yl)glycerol 3-phosphate + L-serine = D-glyceraldehyde 3-phosphate + L-tryptophan + H2O. Its pathway is amino-acid biosynthesis; L-tryptophan biosynthesis; L-tryptophan from chorismate: step 5/5. In terms of biological role, the alpha subunit is responsible for the aldol cleavage of indoleglycerol phosphate to indole and glyceraldehyde 3-phosphate. This is Tryptophan synthase alpha chain from Carboxydothermus hydrogenoformans (strain ATCC BAA-161 / DSM 6008 / Z-2901).